The primary structure comprises 814 residues: DNA replication licensing factor Mcm6 (814 aa).

The C4-type zinc-finger motif lies at 152-179; it reads CLDCQTEIRDVEQQFKFTNPTICRNPVC. The 207-residue stretch at 339 to 545 folds into the MCM domain; the sequence is LYQNLINSLF…VVDYAIARKI (207 aa). Ser392, Thr393, Ala394, Lys395, Ser396, and Asn497 together coordinate ATP. Positions 521–524 match the Arginine finger motif; the sequence is SRFD. ADP-binding residues include Arg612 and Glu615. The tract at residues 656–696 is disordered; it reads DIHLDEEEGEENENVMDIGEETPEDTPRTNETEENDQDTPA. Residues 659-679 show a composition bias toward acidic residues; that stretch reads LDEEEGEENENVMDIGEETPE.

Belongs to the MCM family. In terms of assembly, component of the Mcm2-7 complex. The complex forms a toroidal hexameric ring with the proposed subunit order Mcm2-Mcm6-Mcm4-Mcm7-Mcm3-Mcm5 (By simililarity). The heterodimers of Mcm4/Mcm6 and Mcm3/Mcm5 interact with Mcm2 and Mcm7.

Its subcellular location is the nucleus. It carries out the reaction ATP + H2O = ADP + phosphate + H(+). Its function is as follows. Acts as a component of the MCM2-7 complex (MCM complex) which is the replicative helicase essential for 'once per cell cycle' DNA replication initiation and elongation in eukaryotic cells. Core component of CDC45-MCM-GINS (CMG) helicase, the molecular machine that unwinds template DNA during replication, and around which the replisome is built. The active ATPase sites in the MCM2-7 ring are formed through the interaction surfaces of two neighboring subunits such that a critical structure of a conserved arginine finger motif is provided in trans relative to the ATP-binding site of the Walker A box of the adjacent subunit. The six ATPase active sites, however, are likely to contribute differentially to the complex helicase activity. In Anopheles gambiae (African malaria mosquito), this protein is DNA replication licensing factor Mcm6.